The chain runs to 224 residues: Germin-like protein 8-12 (224 aa).

The signal sequence occupies residues 1–23 (MASSSLFLLGALLVLASWQAIVA). The cysteines at positions 33 and 48 are disulfide-linked. Residues 60–213 (FNAAKFDMPR…AFQVEKKLID (154 aa)) enclose the Cupin type-1 domain. Asn78 carries an N-linked (GlcNAc...) asparagine glycan. Residues His111, His113, Glu118, and His158 each coordinate Mn(2+).

The protein belongs to the germin family. As to quaternary structure, oligomer (believed to be a pentamer but probably hexamer).

The protein resides in the secreted. It localises to the extracellular space. Its subcellular location is the apoplast. Plays a role in broad-spectrum disease resistance. Probably has no oxalate oxidase activity even if the active site is conserved. This Oryza sativa subsp. japonica (Rice) protein is Germin-like protein 8-12.